Reading from the N-terminus, the 77-residue chain is Translation initiation factor IF-1, chloroplastic (77 aa).

Residues 1-71 (MKEQKLIHEG…TRGRIIYRLR (71 aa)) enclose the S1-like domain.

It belongs to the IF-1 family. As to quaternary structure, component of the 30S ribosomal translation pre-initiation complex which assembles on the 30S ribosome in the order IF-2 and IF-3, IF-1 and N-formylmethionyl-tRNA(fMet); mRNA recruitment can occur at any time during PIC assembly.

The protein resides in the plastid. The protein localises to the chloroplast. Functionally, one of the essential components for the initiation of protein synthesis. Stabilizes the binding of IF-2 and IF-3 on the 30S subunit to which N-formylmethionyl-tRNA(fMet) subsequently binds. Helps modulate mRNA selection, yielding the 30S pre-initiation complex (PIC). Upon addition of the 50S ribosomal subunit IF-1, IF-2 and IF-3 are released leaving the mature 70S translation initiation complex. The polypeptide is Translation initiation factor IF-1, chloroplastic (Asarum canadense (Wild ginger)).